An 89-amino-acid polypeptide reads, in one-letter code: MSLDKGTKEEITKKFQLHEKDTGSADVQIAILTEHITELKEHLKRSPKDQNSRLALLKLVGQRRKLLEYLNSTDTERYKNLITRLNLRK.

Belongs to the universal ribosomal protein uS15 family. As to quaternary structure, part of the 30S ribosomal subunit. Forms a bridge to the 50S subunit in the 70S ribosome, contacting the 23S rRNA.

One of the primary rRNA binding proteins, it binds directly to 16S rRNA where it helps nucleate assembly of the platform of the 30S subunit by binding and bridging several RNA helices of the 16S rRNA. Its function is as follows. Forms an intersubunit bridge (bridge B4) with the 23S rRNA of the 50S subunit in the ribosome. The chain is Small ribosomal subunit protein uS15 from Chlamydia caviae (strain ATCC VR-813 / DSM 19441 / 03DC25 / GPIC) (Chlamydophila caviae).